Reading from the N-terminus, the 417-residue chain is Probable dihydrofolate synthetase (417 aa).

Residue 34–37 participates in ATP binding; the sequence is GKGS. Residues Ser58, Glu123, and His151 each contribute to the Mg(2+) site. ATP-binding residues include Arg274 and Asp289.

Belongs to the folylpolyglutamate synthase family.

The enzyme catalyses 7,8-dihydropteroate + L-glutamate + ATP = 7,8-dihydrofolate + ADP + phosphate + H(+). It participates in cofactor biosynthesis; tetrahydrofolylpolyglutamate biosynthesis. Functionally, glutamate-adding enzyme which catalyzes the binding of the first glutamyl side chain to dihydropteroate. Leads to the de nove synthesis of tetrahydrofolate. de novo. The chain is Probable dihydrofolate synthetase (fol3) from Schizosaccharomyces pombe (strain 972 / ATCC 24843) (Fission yeast).